We begin with the raw amino-acid sequence, 110 residues long: Hydrogenase maturation factor HypA (110 aa).

Residue His2 participates in Ni(2+) binding. Zn(2+) contacts are provided by Cys70, Cys73, Cys86, and Cys89.

It belongs to the HypA/HybF family.

In terms of biological role, involved in the maturation of [NiFe] hydrogenases. Required for nickel insertion into the metal center of the hydrogenase. This is Hydrogenase maturation factor HypA from Geobacter sp. (strain M21).